Here is a 502-residue protein sequence, read N- to C-terminus: Lysine--tRNA ligase (502 aa).

The Mg(2+) site is built by Glu-403 and Glu-410.

It belongs to the class-II aminoacyl-tRNA synthetase family. As to quaternary structure, homodimer. Mg(2+) serves as cofactor.

It localises to the cytoplasm. The enzyme catalyses tRNA(Lys) + L-lysine + ATP = L-lysyl-tRNA(Lys) + AMP + diphosphate. This Synechococcus sp. (strain CC9902) protein is Lysine--tRNA ligase.